Consider the following 163-residue polypeptide: Protein-export protein SecB (163 aa).

The protein belongs to the SecB family. As to quaternary structure, homotetramer, a dimer of dimers. One homotetramer interacts with 1 SecA dimer.

It localises to the cytoplasm. One of the proteins required for the normal export of preproteins out of the cell cytoplasm. It is a molecular chaperone that binds to a subset of precursor proteins, maintaining them in a translocation-competent state. It also specifically binds to its receptor SecA. The sequence is that of Protein-export protein SecB from Burkholderia cenocepacia (strain ATCC BAA-245 / DSM 16553 / LMG 16656 / NCTC 13227 / J2315 / CF5610) (Burkholderia cepacia (strain J2315)).